We begin with the raw amino-acid sequence, 696 residues long: Polyribonucleotide nucleotidyltransferase (696 aa).

Asp483 and Asp489 together coordinate Mg(2+). The KH domain maps to 550-609 (PRITTIYVKTDKIRDVIGSGGKNIRGITEATGVTIDIDDTGKINIASTDKAACDLAIKMI). The region spanning 619–687 (GKLYMGLVKK…KQGKIKLSRK (69 aa)) is the S1 motif domain.

Belongs to the polyribonucleotide nucleotidyltransferase family. Mg(2+) is required as a cofactor.

It is found in the cytoplasm. It carries out the reaction RNA(n+1) + phosphate = RNA(n) + a ribonucleoside 5'-diphosphate. Its function is as follows. Involved in mRNA degradation. Catalyzes the phosphorolysis of single-stranded polyribonucleotides processively in the 3'- to 5'-direction. This chain is Polyribonucleotide nucleotidyltransferase, found in Geotalea uraniireducens (strain Rf4) (Geobacter uraniireducens).